The following is a 255-amino-acid chain: Acetylglutamate kinase (255 aa).

Substrate is bound by residues 40–41 (GG), R62, and N153.

The protein belongs to the acetylglutamate kinase family. ArgB subfamily.

Its subcellular location is the cytoplasm. It carries out the reaction N-acetyl-L-glutamate + ATP = N-acetyl-L-glutamyl 5-phosphate + ADP. It functions in the pathway amino-acid biosynthesis; L-arginine biosynthesis; N(2)-acetyl-L-ornithine from L-glutamate: step 2/4. Catalyzes the ATP-dependent phosphorylation of N-acetyl-L-glutamate. In Bacillus cereus (strain 03BB102), this protein is Acetylglutamate kinase.